A 434-amino-acid polypeptide reads, in one-letter code: Protein TolB homolog (434 aa).

Positions 1 to 27 are cleaved as a signal peptide; it reads MRSTRNSFACLCIMLFGMLFVPFTLRA. The segment at 413–434 is disordered; the sequence is SNQRPLLNMQGEQQQPSWSVSK.

It belongs to the TolB family.

Its subcellular location is the periplasm. This is Protein TolB homolog from Chlorobaculum tepidum (strain ATCC 49652 / DSM 12025 / NBRC 103806 / TLS) (Chlorobium tepidum).